The sequence spans 312 residues: MEESSRVLIVGGTGYIGRRIVKASIALGHPTFILFRKEVVSDVEKVEMLLSFKKNGAKLLEASFDDHESLVDAVKQVDVVISAVAGNHMRHHILQQLKLVEAIKEAGNIKRFVPSEFGMDPGLMEHAMAPGNIVFIDKIKVREAIEAASIPHTYISANIFAGYLVGGLAQLGRVMPPSEKVILYGDGNVKAVWVDEDDVGIYTIKAIDDPHTLNKTMYIRPPLNILSQKEVVEKWEKLSGKSLNKINISVEDFLAGMEGQSYGEQIGISHFYQMFYRGDLYNFEIGPNGVEASQLYPEVKYTTVDSYMERYL.

NADP(+) is bound by residues 11–17 (GGTGYIG), R36, and K45. K138 serves as the catalytic Proton acceptor. R142 serves as a coordination point for NADP(+). A substrate-binding site is contributed by H270.

It belongs to the NmrA-type oxidoreductase family. Isoflavone reductase subfamily. As to quaternary structure, dimer.

The enzyme catalyses (+)-lariciresinol + NADP(+) = (+)-pinoresinol + NADPH + H(+). It catalyses the reaction (-)-secoisolariciresinol + NADP(+) = (+)-lariciresinol + NADPH + H(+). It carries out the reaction (-)-lariciresinol + NADP(+) = (-)-pinoresinol + NADPH + H(+). In terms of biological role, reductase involved in lignan biosynthesis. Catalyzes the enantioselective sequential conversion of (+)-pinoresinol into (+)-lariciresinol and of (+)-lariciresinol into (-)-secoisolariciresinol. Can also convert with a lower efficiency (-)-pinoresinol into (-)-lariciresinol, but not (-)-lariciresinol into (+)-secoisolariciresinol. Abstracts the 4R-hydride from the NADPH cofactor during catalysis. The polypeptide is Bifunctional pinoresinol-lariciresinol reductase 2 (PLR_Tp2) (Thuja plicata (Western red-cedar)).